The following is a 207-amino-acid chain: Guanylate kinase (207 aa).

A Guanylate kinase-like domain is found at 4–184; it reads GTLYIVSAPS…ALTDLKTIIR (181 aa). Position 11–18 (11–18) interacts with ATP; sequence APSGAGKS.

The protein belongs to the guanylate kinase family.

It localises to the cytoplasm. The enzyme catalyses GMP + ATP = GDP + ADP. Essential for recycling GMP and indirectly, cGMP. This chain is Guanylate kinase, found in Escherichia coli O157:H7.